The primary structure comprises 126 residues: Small ribosomal subunit protein uS12 (126 aa).

The segment at 1-26 is disordered; it reads MPTINQLVRKGRASETTKSKSPALQD. D89 is modified (3-methylthioaspartic acid). The interval 103 to 126 is disordered; sequence DTQGVKDRKQARSKYGAKRAKAGK. Over residues 113–126 the composition is skewed to basic residues; it reads ARSKYGAKRAKAGK.

Belongs to the universal ribosomal protein uS12 family. As to quaternary structure, part of the 30S ribosomal subunit. Contacts proteins S8 and S17. May interact with IF1 in the 30S initiation complex.

Functionally, with S4 and S5 plays an important role in translational accuracy. Its function is as follows. Interacts with and stabilizes bases of the 16S rRNA that are involved in tRNA selection in the A site and with the mRNA backbone. Located at the interface of the 30S and 50S subunits, it traverses the body of the 30S subunit contacting proteins on the other side and probably holding the rRNA structure together. The combined cluster of proteins S8, S12 and S17 appears to hold together the shoulder and platform of the 30S subunit. This is Small ribosomal subunit protein uS12 from Paraburkholderia xenovorans (strain LB400).